The chain runs to 1691 residues: Protein TIC 214 (1691 aa).

Transmembrane regions (helical) follow at residues Met-19–Leu-39, Val-60–Leu-80, Leu-84–Pro-104, Leu-123–Leu-143, Thr-158–Phe-178, and Phe-200–Ala-220. The disordered stretch occupies residues Glu-819–Lys-839.

The protein belongs to the TIC214 family. As to quaternary structure, part of the Tic complex.

The protein localises to the plastid. It is found in the chloroplast inner membrane. In terms of biological role, involved in protein precursor import into chloroplasts. May be part of an intermediate translocation complex acting as a protein-conducting channel at the inner envelope. The protein is Protein TIC 214 of Adiantum capillus-veneris (Maidenhair fern).